The chain runs to 85 residues: Putative membrane protein insertion efficiency factor (85 aa).

It belongs to the UPF0161 family.

The protein resides in the cell membrane. Its function is as follows. Could be involved in insertion of integral membrane proteins into the membrane. The protein is Putative membrane protein insertion efficiency factor of Leifsonia xyli subsp. xyli (strain CTCB07).